Reading from the N-terminus, the 78-residue chain is Large ribosomal subunit protein bL28 (78 aa).

The protein belongs to the bacterial ribosomal protein bL28 family.

The sequence is that of Large ribosomal subunit protein bL28 from Rippkaea orientalis (strain PCC 8801 / RF-1) (Cyanothece sp. (strain PCC 8801)).